Consider the following 217-residue polypeptide: MRLRNKPWAQKLVVEHPEAILNEPDPEKKINWEERFDDFSKPLAIEIGSGKGQFITTLAKKHPEMNFIGVELQTTAAGMILRTKLEEKIDNLQLMCADAANIAMYLPENSVDVVYLNFSDPWPKTRHEKRRLTYKSFLDKYRQILKPEGHLEFKTDNQGLFEYSLVSLNNYGMKFDYVSLDLHHAENEILERNVETEYEHKFAAKGNPIYCLHAHFE.

4 residues coordinate S-adenosyl-L-methionine: Glu-46, Glu-71, Asp-98, and Asp-120. Residue Asp-120 is part of the active site. Lys-124 serves as a coordination point for substrate. An interaction with RNA region spans residues Arg-126–Arg-131. Substrate-binding positions include Asp-156 and Thr-196–Glu-199.

The protein belongs to the class I-like SAM-binding methyltransferase superfamily. TrmB family.

The enzyme catalyses guanosine(46) in tRNA + S-adenosyl-L-methionine = N(7)-methylguanosine(46) in tRNA + S-adenosyl-L-homocysteine. The protein operates within tRNA modification; N(7)-methylguanine-tRNA biosynthesis. Functionally, catalyzes the formation of N(7)-methylguanine at position 46 (m7G46) in tRNA. In Lactobacillus gasseri (strain ATCC 33323 / DSM 20243 / BCRC 14619 / CIP 102991 / JCM 1131 / KCTC 3163 / NCIMB 11718 / NCTC 13722 / AM63), this protein is tRNA (guanine-N(7)-)-methyltransferase.